The primary structure comprises 107 residues: Integration host factor subunit alpha (107 aa).

This sequence belongs to the bacterial histone-like protein family. Heterodimer of an alpha and a beta chain.

Its function is as follows. This protein is one of the two subunits of integration host factor, a specific DNA-binding protein that functions in genetic recombination as well as in transcriptional and translational control. The sequence is that of Integration host factor subunit alpha from Mesorhizobium japonicum (strain LMG 29417 / CECT 9101 / MAFF 303099) (Mesorhizobium loti (strain MAFF 303099)).